A 212-amino-acid chain; its full sequence is Large ribosomal subunit protein uL4 (212 aa).

It belongs to the universal ribosomal protein uL4 family. In terms of assembly, part of the 50S ribosomal subunit.

Its function is as follows. One of the primary rRNA binding proteins, this protein initially binds near the 5'-end of the 23S rRNA. It is important during the early stages of 50S assembly. It makes multiple contacts with different domains of the 23S rRNA in the assembled 50S subunit and ribosome. Forms part of the polypeptide exit tunnel. In Phenylobacterium zucineum (strain HLK1), this protein is Large ribosomal subunit protein uL4.